The primary structure comprises 486 residues: Alpha-L-arabinofuranosidase B (486 aa).

Positions 1–25 are cleaved as a signal peptide; the sequence is MLSLKAVLRFASVAVAVVLPTLAQA. An N-linked (GlcNAc...) asparagine glycan is attached at Asn-42. Residues 45–342 are catalytic; sequence LVKQRADPQI…KLYWRSDGTP (298 aa). Asp-51 functions as the Proton acceptor in the catalytic mechanism. The Proton donor role is filled by Glu-229. Asn-302, Asn-416, and Asn-426 each carry an N-linked (GlcNAc...) asparagine glycan. Positions 359–467 are ABD; sequence SSADQTLYVG…AGSYLVSGGN (109 aa).

This sequence belongs to the glycosyl hydrolase 43 family.

It is found in the secreted. The enzyme catalyses Hydrolysis of terminal non-reducing alpha-L-arabinofuranoside residues in alpha-L-arabinosides.. The protein operates within glycan metabolism; L-arabinan degradation. Functionally, secreted arabinofuranosidase that causes degradation of rice cell wall components during infection. Required for virulence. This is Alpha-L-arabinofuranosidase B from Pyricularia oryzae (strain 70-15 / ATCC MYA-4617 / FGSC 8958) (Rice blast fungus).